The primary structure comprises 215 residues: Ribonuclease T (215 aa).

The region spanning 20-194 is the Exonuclease domain; sequence VVIDVETAGF…YDTERTAVLF (175 aa). Mg(2+)-binding residues include Asp23, Glu25, His181, and Asp186. His181 (proton donor/acceptor) is an active-site residue.

This sequence belongs to the RNase T family. Homodimer. Mg(2+) is required as a cofactor.

In terms of biological role, trims short 3' overhangs of a variety of RNA species, leaving a one or two nucleotide 3' overhang. Responsible for the end-turnover of tRNA: specifically removes the terminal AMP residue from uncharged tRNA (tRNA-C-C-A). Also appears to be involved in tRNA biosynthesis. This Citrobacter koseri (strain ATCC BAA-895 / CDC 4225-83 / SGSC4696) protein is Ribonuclease T.